The chain runs to 390 residues: Stearoyl-[acyl-carrier-protein] 9-desaturase 5, chloroplastic (390 aa).

Residues 1-22 (MAFAASHTASPSSCGGVAQRRS) form a disordered region. The N-terminal 31 residues, 1 to 31 (MAFAASHTASPSSCGGVAQRRSNGMSPVVAM), are a transit peptide targeting the chloroplast. 6 residues coordinate Fe cation: E132, E170, H173, E223, E256, and H259.

This sequence belongs to the fatty acid desaturase type 2 family. Homodimer. Fe(2+) is required as a cofactor.

Its subcellular location is the plastid. The protein localises to the chloroplast. The catalysed reaction is octadecanoyl-[ACP] + 2 reduced [2Fe-2S]-[ferredoxin] + O2 + 2 H(+) = (9Z)-octadecenoyl-[ACP] + 2 oxidized [2Fe-2S]-[ferredoxin] + 2 H2O. It functions in the pathway lipid metabolism; fatty acid metabolism. In terms of biological role, converts stearoyl-ACP to oleoyl-ACP by introduction of a cis double bond between carbons 9 and 10 of the acyl chain. The polypeptide is Stearoyl-[acyl-carrier-protein] 9-desaturase 5, chloroplastic (Oryza sativa subsp. japonica (Rice)).